Consider the following 482-residue polypeptide: Immune evasion protein OPG047 (482 aa).

The BTB domain occupies 20–90; it reads KKFKTIIEAI…SYTGKVYIDS (71 aa). The region spanning 125–222 is the BACK domain; sequence CIECYMMGIE…SNYLSPRGIH (98 aa). Kelch repeat units follow at residues 273 to 319, 320 to 363, 365 to 408, 410 to 447, and 448 to 482; these read VVYL…PANN, KLYV…SINN, IYVM…VFGR, LFLV…IVDN, and KLLL…GMEW.

It belongs to the orthopoxvirus OPG047 family.

Might have a role in the suppression of host immune response. The chain is Immune evasion protein OPG047 (OPG047) from Cynomys gunnisoni (Gunnison's prairie dog).